A 340-amino-acid polypeptide reads, in one-letter code: COP9 signalosome complex subunit 5 (340 aa).

The region spanning 52 to 189 is the MPN domain; that stretch reads VRISATALIK…IGAFRTYPAD (138 aa). Residues histidine 135, histidine 137, and aspartate 148 each contribute to the Zn(2+) site. The short motif at 135-148 is the JAMM motif element; it reads HSHPGYGCWLSGID.

The protein belongs to the peptidase M67A family. CSN5 subfamily. In terms of assembly, component of the COP9 signalosome (CSN) complex.

It localises to the cytoplasm. The protein localises to the nucleus. Functionally, catalytic Component of the COP9 signalosome (CSN) complex that acts as an regulator of the ubiquitin (Ubl) conjugation pathway by mediating the deneddylation of the cullin subunit of SCF-type E3 ubiquitin-protein ligase complexes. This Gibberella zeae (strain ATCC MYA-4620 / CBS 123657 / FGSC 9075 / NRRL 31084 / PH-1) (Wheat head blight fungus) protein is COP9 signalosome complex subunit 5 (RRI1).